Reading from the N-terminus, the 253-residue chain is Eukaryotic initiation factor 4A-6 (253 aa).

The Helicase ATP-binding domain occupies His-1–Ile-82. A DEAD box motif is present at residues Asp-30–Asp-33. One can recognise a Helicase C-terminal domain in the interval Gly-93–Leu-253.

It belongs to the DEAD box helicase family. eIF4A subfamily. EIF4F is a multi-subunit complex, the composition of which varies with external and internal environmental conditions. It is composed of at least EIF4A, EIF4E and EIF4G.

The catalysed reaction is ATP + H2O = ADP + phosphate + H(+). ATP-dependent RNA helicase which is a subunit of the eIF4F complex involved in cap recognition and is required for mRNA binding to ribosome. In the current model of translation initiation, eIF4A unwinds RNA secondary structures in the 5'-UTR of mRNAs which is necessary to allow efficient binding of the small ribosomal subunit, and subsequent scanning for the initiator codon. This is Eukaryotic initiation factor 4A-6 from Nicotiana tabacum (Common tobacco).